A 308-amino-acid chain; its full sequence is Homogentisate phytyltransferase (308 aa).

8 helical membrane passes run 13-33 (PHTI…TILG), 44-64 (LDLV…IVGL), 104-124 (LAIA…SLII), 142-162 (AALC…FLFF), 173-193 (ITPI…IAIF), 219-241 (VFRG…GLWA), 245-263 (LNTA…LLWW), and 279-299 (FYQF…LALW).

Belongs to the UbiA prenyltransferase family.

It localises to the membrane. The enzyme catalyses phytyl diphosphate + homogentisate + H(+) = 2-methyl-6-phytyl-1,4-benzene-1,4-diol + CO2 + diphosphate. The protein operates within cofactor biosynthesis; tocopherol biosynthesis. Functionally, involved in the synthesis of tocopherol (vitamin E). Catalyzes the condensation of homogentisate and phytyl diphosphate to form dimethylphytylhydrquinone. The polypeptide is Homogentisate phytyltransferase (Synechocystis sp. (strain ATCC 27184 / PCC 6803 / Kazusa)).